The primary structure comprises 401 residues: Beta-ketoadipyl-CoA thiolase (401 aa).

Cys-90 acts as the Acyl-thioester intermediate in catalysis. Active-site proton acceptor residues include His-357 and Cys-387.

The protein belongs to the thiolase-like superfamily. Thiolase family.

The catalysed reaction is succinyl-CoA + acetyl-CoA = 3-oxoadipyl-CoA + CoA. It participates in aromatic compound metabolism; beta-ketoadipate pathway; acetyl-CoA and succinyl-CoA from 3-oxoadipate: step 2/2. Its function is as follows. Catalyzes thiolytic cleavage of beta-ketoadipyl-CoA to succinyl-CoA and acetyl-CoA. The polypeptide is Beta-ketoadipyl-CoA thiolase (catF) (Acinetobacter baylyi (strain ATCC 33305 / BD413 / ADP1)).